The sequence spans 160 residues: General odorant-binding protein 2 (160 aa).

Residues 1-19 (MGYKLLLMYIAIVIDSVIG) form the signal peptide. 3 disulfide bridges follow: C38–C73, C69–C127, and C116–C136.

Belongs to the PBP/GOBP family. In terms of tissue distribution, antenna.

In terms of biological role, present in the aqueous fluid surrounding olfactory sensory dendrites and are thought to aid in the capture and transport of hydrophobic odorants into and through this fluid. The protein is General odorant-binding protein 2 of Antheraea pernyi (Chinese oak silk moth).